The primary structure comprises 908 residues: Protein translocase subunit SecA (908 aa).

Residues Q87, 105–109 (GEGKT), and D512 contribute to the ATP site. The disordered stretch occupies residues 865–908 (GGDDGSDEMMAHTPMIRDGDKVGRNDPCPCGSGRKYKQCHGKLS). Residues 879–888 (MIRDGDKVGR) are compositionally biased toward basic and acidic residues. Positions 892, 894, 903, and 904 each coordinate Zn(2+). Residues 898–908 (RKYKQCHGKLS) are compositionally biased toward basic residues.

The protein belongs to the SecA family. In terms of assembly, monomer and homodimer. Part of the essential Sec protein translocation apparatus which comprises SecA, SecYEG and auxiliary proteins SecDF-YajC and YidC. Requires Zn(2+) as cofactor.

It is found in the cell inner membrane. Its subcellular location is the cytoplasm. It catalyses the reaction ATP + H2O + cellular proteinSide 1 = ADP + phosphate + cellular proteinSide 2.. Functionally, part of the Sec protein translocase complex. Interacts with the SecYEG preprotein conducting channel. Has a central role in coupling the hydrolysis of ATP to the transfer of proteins into and across the cell membrane, serving both as a receptor for the preprotein-SecB complex and as an ATP-driven molecular motor driving the stepwise translocation of polypeptide chains across the membrane. The protein is Protein translocase subunit SecA of Shewanella sp. (strain MR-7).